A 1050-amino-acid chain; its full sequence is Antibiotic efflux pump membrane transporter ArpB (1050 aa).

Helical transmembrane passes span 10–30 (IFAWVIALVIMLVGALSILKL), 339–359 (GVIHTLIEAVVLVFLVMYLFL), 370–390 (MTVPVVLLGTFGILAAAGFSI), 393–413 (LTMFAMVLAIGLLVDDAIVVV), 440–460 (GALVGIALVLSAVLLPMAFFG), 472–492 (ITIVSAMGLSVLVALIFTPAL), 539–559 (VPFLLGYALIVVGMIWLFARI), 871–891 (MPALFALSVLFVFLCLAALYE), 893–913 (WSIPIAVVLVVPLGIIGALIA), 923–943 (VYFLVGLLTTIGLAAKNAILI), 972–992 (IIMTSLAFILGVVPLTIASGA), and 1004–1024 (VIGGMISATVLAIFWVPLFFV).

It belongs to the resistance-nodulation-cell division (RND) (TC 2.A.6) family.

It is found in the cell inner membrane. Functionally, the inner membrane transporter component of an antibiotic efflux pump. Confers resistance to numerous structurally unrelated antibiotics such as carbenicillin, chloramphenicol, erythromycin, novobiocin, streptomycin and tetracycline. Is not involved in organic solvent efflux. This chain is Antibiotic efflux pump membrane transporter ArpB (arpB), found in Pseudomonas putida (Arthrobacter siderocapsulatus).